Reading from the N-terminus, the 541-residue chain is Sialate O-acetylesterase (541 aa).

Positions 1–23 are cleaved as a signal peptide; that stretch reads MVSPGPVFGIVLLIIARVSRSAG. N-linked (GlcNAc...) asparagine glycosylation is found at Asn-107, Asn-138, Asn-188, Asn-293, Asn-356, Asn-427, Asn-448, and Asn-462.

Disulfide-linked heterodimer of a small subunit and a large subunit. In terms of processing, the two subunits are derived from a single precursor by proteolytic cleavage. The lysosomal isoform is glycosylated. As to expression, highly expressed in liver, testis, and kidney, whereas skeletal muscle, adipose tissue, and heart have lower levels. In terms of tissue distribution, highest expression in brain and ovary and lower levels in liver and thymus.

It is found in the lysosome. It localises to the cytoplasm. The enzyme catalyses N-acetyl-9-O-acetylneuraminate + H2O = N-acetylneuraminate + acetate + H(+). The catalysed reaction is an Ac-O-9-sialoglycoconjugate + H2O = a sialoglycoconjugate + acetate + H(+). Its activity is regulated as follows. Inhibited by diisopropyl fluorophosphate and diethyl-P-nitrophenyl phosphate. Functionally, catalyzes the removal of O-acetyl ester groups from position 9 of the free diacetylated sialate N-acetyl-9-O-acetylneuraminate (Neu5,9Ac2) in the cytosol and of the diacetylated sialate residues of sialylglycoconjugates in the lysosomes. Together with the sialate-O-acetyltransferase they regulate the balance of acetylated sialoglycoconjugates, key players in various processes such as cell-cell interactions, host-pathogen recognition, and tumor antigenicity. The sequence is that of Sialate O-acetylesterase (Siae) from Mus musculus (Mouse).